A 951-amino-acid chain; its full sequence is Metal transporter CNNM1 (951 aa).

The chain crosses the membrane as a helical span at residues 23 to 43 (AVLLLFFSLSPRPPAAAAWLL). The interval 116-135 (GGVAPSAVPTRPPGPQRCRE) is disordered. The CNNM transmembrane domain occupies 218 to 414 (LLPPAWLRAL…DPYSDLVKEE (197 aa)). The next 3 membrane-spanning stretches (helical) occupy residues 222–242 (AWLRALGALLLLALSALFSGL), 282–302 (LLCTLLLGQAGANAALAGWLY), and 321–341 (IHFPWLPALVCTGAVFLGAEI). CBS domains lie at 433–495 (LTPL…CTPL) and 502–568 (YNRP…ILDE). Polar residues-rich tracts occupy residues 731 to 740 (SRCSGLNRSE) and 814 to 824 (KAPTTRGTPQT). Disordered stretches follow at residues 731–753 (SRCSGLNRSESPNRERSDFGGSN) and 795–830 (MDSSPQSPDMEAFTDGDSTKAPTTRGTPQTPKDDPA). A phosphothreonine mark is found at Thr-821 and Thr-824. Ser-850 carries the post-translational modification Phosphoserine. Residues 920–951 (KLLRTLSGQKRKRSPEGERTSEDNSNLTPLIT) are disordered. Positions 942–951 (DNSNLTPLIT) are enriched in polar residues.

The protein belongs to the ACDP family. Restricted to brain and testis.

It is found in the cell membrane. In terms of biological role, probable metal transporter. The protein is Metal transporter CNNM1 (CNNM1) of Homo sapiens (Human).